Consider the following 385-residue polypeptide: Histidinol-phosphate aminotransferase (385 aa).

Lys235 carries the N6-(pyridoxal phosphate)lysine modification.

The protein belongs to the class-II pyridoxal-phosphate-dependent aminotransferase family. Histidinol-phosphate aminotransferase subfamily. As to quaternary structure, homodimer. Pyridoxal 5'-phosphate is required as a cofactor.

The catalysed reaction is L-histidinol phosphate + 2-oxoglutarate = 3-(imidazol-4-yl)-2-oxopropyl phosphate + L-glutamate. The protein operates within amino-acid biosynthesis; L-histidine biosynthesis; L-histidine from 5-phospho-alpha-D-ribose 1-diphosphate: step 7/9. The protein is Histidinol-phosphate aminotransferase of Nocardia farcinica (strain IFM 10152).